Reading from the N-terminus, the 459-residue chain is Proton-coupled folate transporter (459 aa).

Met-1 carries the N-acetylmethionine modification. The Cytoplasmic portion of the chain corresponds to 1–25 (MEGRANSPGEPRAWPTRSVLCRGCV). The helical transmembrane segment at 26 to 44 (EPLVFLANFALVLQGPVTT) threads the bilayer. Topologically, residues 45–82 (QYLWHRFSADLGYNGTRHRDSCSNHSVDPIAQEVETLT) are extracellular. N-linked (GlcNAc...) asparagine glycans are attached at residues Asn-58 and Asn-68. Cys-66 and Cys-298 are disulfide-bonded. Residues 83-108 (SHWTLYMNVGGFLVGLFSSTLLGAWS) traverse the membrane as a helical segment. Over 109–112 (DCVG) the chain is Cytoplasmic. A helical transmembrane segment spans residues 113–135 (RRPLLVLASLGLLLQTVLSIFVV). At 136–140 (QLHLH) the chain is on the extracellular side. A helical transmembrane segment spans residues 141 to 154 (IGYLVLGRILCALL). The Cytoplasmic portion of the chain corresponds to 155–177 (GDFSGLLAASFASVADVSSSRTR). Asp-156 and Glu-185 together coordinate H(+). A helical transmembrane segment spans residues 178 to 203 (TIRMALLEACIGVAGMLASFIGGFLL). Residues 204–208 (QEQVY) are Extracellular-facing. The chain crosses the membrane as a helical span at residues 209 to 227 (VNPFWLALAVLTVMTLYAA). The Cytoplasmic portion of the chain corresponds to 228 to 266 (FCFGETVKERTPTRLFTLRHHRSVIQLYVTQAPEKSRKH). The chain crosses the membrane as a helical span at residues 267 to 289 (LALYSLAIFVMITVHLGAQDILT). His-281 contributes to the H(+) binding site. The Extracellular segment spans residues 290–302 (LYELSAPLCWDSR). Residues 303-325 (LISYGSAAQQLPYLTSLLGLRLL) form a helical membrane-spanning segment. The Cytoplasmic segment spans residues 326–331 (QYCLAD). Residues 332–351 (TWVAEIGLVFNILGMMVFAF) form a helical membrane-spanning segment. The Extracellular segment spans residues 352 to 355 (ATIT). Residues 356–376 (PLMFTGYGLLFLSLVVTPIIR) traverse the membrane as a helical segment. At 377-388 (AKLSRLVRQSEQ) the chain is on the cytoplasmic side. A helical transmembrane segment spans residues 389 to 414 (GALFSALACVNGLAMLMASGIFNSLY). The Extracellular segment spans residues 415–422 (PATLNLMK). The helical transmembrane segment at 423 to 441 (GFPFLLAAGLLFIPAILMG) threads the bilayer. Residues 442–459 (ILERDNHCPEFQEFSQSP) are Cytoplasmic-facing. The residue at position 458 (Ser-458) is a Phosphoserine.

Belongs to the major facilitator superfamily. SLC46A family. As to quaternary structure, monomer. As to expression, expressed in retina and retinal pigment epithelium.

Its subcellular location is the cell membrane. It is found in the apical cell membrane. The protein localises to the basolateral cell membrane. It localises to the endosome membrane. The protein resides in the cytoplasm. It catalyses the reaction folate(in) + H(+)(in) = folate(out) + H(+)(out). The catalysed reaction is (6S)-5-methyl-5,6,7,8-tetrahydrofolate(in) + H(+)(in) = (6S)-5-methyl-5,6,7,8-tetrahydrofolate(out) + H(+)(out). The enzyme catalyses methotrexate(in) + H(+)(in) = methotrexate(out) + H(+)(out). It carries out the reaction pemetrexed(in) + H(+)(in) = pemetrexed(out) + H(+)(out). Functionally, proton-coupled folate symporter that mediates folate absorption using an H(+) gradient as a driving force. Involved in the intestinal absorption of folates at the brush-border membrane of the proximal jejunum, and the transport from blood to cerebrospinal fluid across the choroid plexus. Functions at acidic pH via alternate outward- and inward-open conformation states. Protonation of residues in the outward open state primes the protein for transport. Binding of folate promotes breaking of salt bridge network and subsequent closure of the extracellular gate, leading to the inward-open state and release of protons and folate. Also able to transport antifolate drugs, such as methotrexate and pemetrexed. Involved in FOLR1-mediated endocytosis by serving as a route of export of folates from acidified endosomes. Also acts as a lower-affinity, pH-independent heme carrier protein and constitutes the main importer of heme in the intestine. Imports heme in the retina and retinal pigment epithelium, in neurons of the hippocampus, in hepatocytes and in the renal epithelial cells. Hence, participates in the trafficking of heme and increases intracellular iron content. The chain is Proton-coupled folate transporter from Bos taurus (Bovine).